The chain runs to 815 residues: Probable inorganic carbon transporter subunit DabA (815 aa).

Zn(2+) contacts are provided by Cys334, Asp336, His507, and Cys522.

It belongs to the inorganic carbon transporter (TC 9.A.2) DabA family. In terms of assembly, forms a complex with DabB. It depends on Zn(2+) as a cofactor.

It is found in the cell inner membrane. In terms of biological role, part of an energy-coupled inorganic carbon pump. The protein is Probable inorganic carbon transporter subunit DabA of Ectopseudomonas mendocina (strain ymp) (Pseudomonas mendocina).